The chain runs to 181 residues: 28 kDa heat- and acid-stable phosphoprotein (181 aa).

Residues 1 to 14 (MPKGGRKGGHKGRA) are compositionally biased toward basic residues. A disordered region spans residues 1-117 (MPKGGRKGGH…SRREREEIEK (117 aa)). Phosphothreonine is present on Thr18. Phosphoserine is present on Ser19. Basic and acidic residues predominate over residues 30–59 (EKQKAREEEEQKEGGDGAAGDPKKEKKSLD). Residue Lys52 forms a Glycyl lysine isopeptide (Lys-Gly) (interchain with G-Cter in SUMO2) linkage. Phosphoserine occurs at positions 57, 60, and 63. Over residues 60-69 (SDESEDEEDD) the composition is skewed to acidic residues. Position 70 is a phosphotyrosine (Tyr70). Residues 102–117 (DGPKELSRREREEIEK) show a composition bias toward basic and acidic residues. Lys126 carries the N6-methyllysine modification. Residues Lys132 and Lys164 each carry the N6-acetyllysine modification. Residues 151–167 (EEAARKKEEERKAKDDA) are compositionally biased toward basic and acidic residues. Positions 151 to 181 (EEAARKKEEERKAKDDATLSGKRMQSLSLNK) are disordered. Phosphoserine is present on residues Ser176 and Ser178.

Belongs to the PDAP1 family.

In terms of biological role, enhances PDGFA-stimulated cell growth in fibroblasts, but inhibits the mitogenic effect of PDGFB. The polypeptide is 28 kDa heat- and acid-stable phosphoprotein (PDAP1) (Homo sapiens (Human)).